We begin with the raw amino-acid sequence, 350 residues long: Biotin synthase (350 aa).

One can recognise a Radical SAM core domain in the interval 38-256 (NYVQVSTLLS…IAVARIMMPT (219 aa)). C53, C57, and C60 together coordinate [4Fe-4S] cluster. Residues C97, C128, C188, and R260 each coordinate [2Fe-2S] cluster.

Belongs to the radical SAM superfamily. Biotin synthase family. Homodimer. Requires [4Fe-4S] cluster as cofactor. It depends on [2Fe-2S] cluster as a cofactor.

The catalysed reaction is (4R,5S)-dethiobiotin + (sulfur carrier)-SH + 2 reduced [2Fe-2S]-[ferredoxin] + 2 S-adenosyl-L-methionine = (sulfur carrier)-H + biotin + 2 5'-deoxyadenosine + 2 L-methionine + 2 oxidized [2Fe-2S]-[ferredoxin]. It participates in cofactor biosynthesis; biotin biosynthesis; biotin from 7,8-diaminononanoate: step 2/2. Its function is as follows. Catalyzes the conversion of dethiobiotin (DTB) to biotin by the insertion of a sulfur atom into dethiobiotin via a radical-based mechanism. The protein is Biotin synthase of Vibrio vulnificus (strain CMCP6).